The primary structure comprises 168 residues: S-ribosylhomocysteine lyase (168 aa).

Fe cation contacts are provided by H54, H58, and C128.

Belongs to the LuxS family. Homodimer. Requires Fe cation as cofactor.

The catalysed reaction is S-(5-deoxy-D-ribos-5-yl)-L-homocysteine = (S)-4,5-dihydroxypentane-2,3-dione + L-homocysteine. In terms of biological role, involved in the synthesis of autoinducer 2 (AI-2) which is secreted by bacteria and is used to communicate both the cell density and the metabolic potential of the environment. The regulation of gene expression in response to changes in cell density is called quorum sensing. Catalyzes the transformation of S-ribosylhomocysteine (RHC) to homocysteine (HC) and 4,5-dihydroxy-2,3-pentadione (DPD). This chain is S-ribosylhomocysteine lyase, found in Histophilus somni (strain 129Pt) (Haemophilus somnus).